Reading from the N-terminus, the 57-residue chain is Large ribosomal subunit protein bL32c (57 aa).

The protein belongs to the bacterial ribosomal protein bL32 family.

It localises to the plastid. The protein localises to the chloroplast. The polypeptide is Large ribosomal subunit protein bL32c (Nandina domestica (Heavenly bamboo)).